Reading from the N-terminus, the 317-residue chain is Acetyl-coenzyme A carboxylase carboxyl transferase subunit alpha (317 aa).

The region spanning 39-293 is the CoA carboxyltransferase C-terminal domain; it reads RLESKAAAAL…EEAIAEGLAG (255 aa).

The protein belongs to the AccA family. In terms of assembly, acetyl-CoA carboxylase is a heterohexamer composed of biotin carboxyl carrier protein (AccB), biotin carboxylase (AccC) and two subunits each of ACCase subunit alpha (AccA) and ACCase subunit beta (AccD).

The protein localises to the cytoplasm. It catalyses the reaction N(6)-carboxybiotinyl-L-lysyl-[protein] + acetyl-CoA = N(6)-biotinyl-L-lysyl-[protein] + malonyl-CoA. It participates in lipid metabolism; malonyl-CoA biosynthesis; malonyl-CoA from acetyl-CoA: step 1/1. Component of the acetyl coenzyme A carboxylase (ACC) complex. First, biotin carboxylase catalyzes the carboxylation of biotin on its carrier protein (BCCP) and then the CO(2) group is transferred by the carboxyltransferase to acetyl-CoA to form malonyl-CoA. The sequence is that of Acetyl-coenzyme A carboxylase carboxyl transferase subunit alpha from Methylobacterium sp. (strain 4-46).